Consider the following 406-residue polypeptide: Vacuole membrane protein 1 (406 aa).

Positions 1–22 are disordered; it reads MAENGTDCEQRRVGMPKEQNNG. Topologically, residues 1 to 42 are cytoplasmic; that stretch reads MAENGTDCEQRRVGMPKEQNNGSFQDPSFMCNRKRRDREERQ. The helical transmembrane segment at 43-63 threads the bilayer; sequence SIVLWRKPLITLQYFILEVLI. The Extracellular segment spans residues 64 to 76; the sequence is NLKEWSVRLWHRR. The helical transmembrane segment at 77–97 threads the bilayer; that stretch reads MMVVSVLLLLAVLSVAYYIEG. Residues 98–110 lie on the Cytoplasmic side of the membrane; sequence EHQQCVQYIEKKC. Residues 111-131 form a helical membrane-spanning segment; sequence LWCAYWVGLGILSSVGLGTGL. Residues 132–250 are Extracellular-facing; that stretch reads HTFLLYLGPH…ATRAKLTVQN (119 aa). A VTT domain region spans residues 173–316; it reads GTEGAISLWT…FVIITFSKHI (144 aa). Residues 251–271 traverse the membrane as a helical segment; sequence LVQKVGFLGILACASIPNPLF. Residues 272–273 lie on the Cytoplasmic side of the membrane; the sequence is DL. Residues 274 to 294 form a helical membrane-spanning segment; it reads AGITCGHFLVPFWTFFGATLI. Residues 295-306 lie on the Extracellular side of the membrane; that stretch reads GKAIIKMHIQKL. Residues 307 to 327 form a helical membrane-spanning segment; the sequence is FVIITFSKHIVEQMVSLIGVI. Topologically, residues 328–363 are cytoplasmic; it reads PSIGPSLQKPFQEYLEAQRKKLHHKGDSGTPQSENW. A helical membrane pass occupies residues 364–384; it reads LSWAFEKLVIIMVFYFILSII. Topologically, residues 385–406 are extracellular; sequence NSMAQSYAKRVQQKKLSVEKTK.

It belongs to the VMP1 family.

It is found in the endoplasmic reticulum-Golgi intermediate compartment membrane. The protein resides in the cell membrane. The protein localises to the vacuole membrane. Its subcellular location is the endoplasmic reticulum membrane. It catalyses the reaction a 1,2-diacyl-sn-glycero-3-phospho-L-serine(in) = a 1,2-diacyl-sn-glycero-3-phospho-L-serine(out). The catalysed reaction is cholesterol(in) = cholesterol(out). The enzyme catalyses a 1,2-diacyl-sn-glycero-3-phosphocholine(in) = a 1,2-diacyl-sn-glycero-3-phosphocholine(out). It carries out the reaction a 1,2-diacyl-sn-glycero-3-phosphoethanolamine(in) = a 1,2-diacyl-sn-glycero-3-phosphoethanolamine(out). Phospholipid scramblase involved in lipid homeostasis and membrane dynamics processes. Has phospholipid scramblase activity toward cholesterol and phosphatidylserine, as well as phosphatidylethanolamine and phosphatidylcholine. Required for autophagosome formation: participates in early stages of autophagosome biogenesis at the endoplasmic reticulum (ER) membrane by reequilibrating the leaflets of the ER as lipids are extracted by atg2 (atg2a or atg2b) to mediate autophagosome assembly. In addition to autophagy, involved in other processes in which phospholipid scramblase activity is required. Modulates ER contacts with lipid droplets, mitochondria and endosomes. This chain is Vacuole membrane protein 1, found in Xenopus laevis (African clawed frog).